Reading from the N-terminus, the 487-residue chain is NADH-quinone oxidoreductase subunit N (487 aa).

14 consecutive transmembrane segments (helical) span residues 8-28 (LIAM…MLSI), 35-55 (FINA…LYFV), 78-98 (GLVI…LVGY), 104-124 (EFYL…SANH), 125-145 (LASL…LIGY), 159-179 (YMLL…LLYA), 203-223 (ILAG…LVPF), 235-255 (PAPV…AVVM), 271-291 (LVLS…AISQ), 297-317 (LLGY…VAVQ), 328-348 (IGVY…VVSL), 376-396 (AVMT…GFIG), 409-428 (LWWL…YYYL), and 451-471 (ALTA…VLGI).

It belongs to the complex I subunit 2 family. As to quaternary structure, NDH-1 is composed of 13 different subunits. Subunits NuoA, H, J, K, L, M, N constitute the membrane sector of the complex.

It is found in the cell inner membrane. The catalysed reaction is a quinone + NADH + 5 H(+)(in) = a quinol + NAD(+) + 4 H(+)(out). In terms of biological role, NDH-1 shuttles electrons from NADH, via FMN and iron-sulfur (Fe-S) centers, to quinones in the respiratory chain. The immediate electron acceptor for the enzyme in this species is believed to be ubiquinone. Couples the redox reaction to proton translocation (for every two electrons transferred, four hydrogen ions are translocated across the cytoplasmic membrane), and thus conserves the redox energy in a proton gradient. This is NADH-quinone oxidoreductase subunit N from Yersinia pseudotuberculosis serotype O:1b (strain IP 31758).